Consider the following 213-residue polypeptide: Imidazole glycerol phosphate synthase subunit HisH (213 aa).

Residues 1–212 (MLAILDYKAG…HRYCTEAADA (212 aa)) form the Glutamine amidotransferase type-1 domain. Cysteine 79 (nucleophile) is an active-site residue. Catalysis depends on residues histidine 187 and glutamate 189.

In terms of assembly, heterodimer of HisH and HisF.

It is found in the cytoplasm. The enzyme catalyses 5-[(5-phospho-1-deoxy-D-ribulos-1-ylimino)methylamino]-1-(5-phospho-beta-D-ribosyl)imidazole-4-carboxamide + L-glutamine = D-erythro-1-(imidazol-4-yl)glycerol 3-phosphate + 5-amino-1-(5-phospho-beta-D-ribosyl)imidazole-4-carboxamide + L-glutamate + H(+). It carries out the reaction L-glutamine + H2O = L-glutamate + NH4(+). The protein operates within amino-acid biosynthesis; L-histidine biosynthesis; L-histidine from 5-phospho-alpha-D-ribose 1-diphosphate: step 5/9. Functionally, IGPS catalyzes the conversion of PRFAR and glutamine to IGP, AICAR and glutamate. The HisH subunit catalyzes the hydrolysis of glutamine to glutamate and ammonia as part of the synthesis of IGP and AICAR. The resulting ammonia molecule is channeled to the active site of HisF. This Nitratidesulfovibrio vulgaris (strain ATCC 29579 / DSM 644 / CCUG 34227 / NCIMB 8303 / VKM B-1760 / Hildenborough) (Desulfovibrio vulgaris) protein is Imidazole glycerol phosphate synthase subunit HisH.